Consider the following 65-residue polypeptide: Large ribosomal subunit protein bL35 (65 aa).

Residues 1 to 23 (MPKMKSNRGAAKRFKRTGSGKFK) form a disordered region. Over residues 10 to 23 (AAKRFKRTGSGKFK) the composition is skewed to basic residues.

Belongs to the bacterial ribosomal protein bL35 family.

In Acidithiobacillus ferrooxidans (strain ATCC 53993 / BNL-5-31) (Leptospirillum ferrooxidans (ATCC 53993)), this protein is Large ribosomal subunit protein bL35.